The chain runs to 273 residues: Exosporium protein C (273 aa).

It is found in the spore wall. The protein is Exosporium protein C of Clostridium sporogenes (strain ATCC 15579).